Here is a 219-residue protein sequence, read N- to C-terminus: Kynurenine formamidase (219 aa).

Tryptophan 28 serves as a coordination point for substrate. Zn(2+) is bound by residues histidine 58, histidine 62, and aspartate 64. The active-site Proton donor/acceptor is histidine 68. Histidine 170 and glutamate 182 together coordinate Zn(2+).

This sequence belongs to the Cyclase 1 superfamily. KynB family. Homodimer. Requires Zn(2+) as cofactor.

The catalysed reaction is N-formyl-L-kynurenine + H2O = L-kynurenine + formate + H(+). It functions in the pathway amino-acid degradation; L-tryptophan degradation via kynurenine pathway; L-kynurenine from L-tryptophan: step 2/2. In terms of biological role, catalyzes the hydrolysis of N-formyl-L-kynurenine to L-kynurenine, the second step in the kynurenine pathway of tryptophan degradation. This chain is Kynurenine formamidase, found in Cupriavidus pinatubonensis (strain JMP 134 / LMG 1197) (Cupriavidus necator (strain JMP 134)).